Consider the following 378-residue polypeptide: Cell surface mannoprotein MP65 (378 aa).

The signal sequence occupies residues 1 to 32 (MLFKSFVTFTVLANALAAPLAHQHHQHKEEKR). Residues 67–124 (VSVSVNTEPPQNHPTTTQDVASASTYPSSTDGSAASSSAAASSSSQAGSEPSGGVGSG) are disordered. Residues 72–93 (NTEPPQNHPTTTQDVASASTYP) are compositionally biased toward polar residues. Positions 94-116 (SSTDGSAASSSAAASSSSQAGSE) are enriched in low complexity. The Nucleophile role is filled by glutamate 316.

This sequence belongs to the glycosyl hydrolase 17 family. In terms of assembly, component of a multiprotein complex of 250 kDa composed of at least HYR1, MP65, and PRA1. Glycosylated protein with a polysaccharide moiety composed exclusively of mannose and glucose at a ratio of 12.7 to 1. Contributes highly to the carbohydrate component of the matrix. Treatment with tunicamycin impairs glycosylation.

The protein localises to the secreted. The protein resides in the cell wall. Surface mannoprotein required for hyphal morphogenesis, surface adherence, and pathogenicity. Contributes in a high proportion to the carbohydrate component of the matrix due to high levels of glycosylation and may play important roles during biofilm development and maintenance. Acts as a major antigen target of host cell-mediated immune response. Induces extensive T-cell proliferation of human peripheral blood mononuclear cells. Facilitates host dendritic cells maturation and promotes cytokine production through its glycosylated portion while its protein core is essentially involved in induction of T-cell response. In Candida albicans (strain SC5314 / ATCC MYA-2876) (Yeast), this protein is Cell surface mannoprotein MP65 (MP65).